A 215-amino-acid polypeptide reads, in one-letter code: UPF0056 membrane protein bbp_248 (215 aa).

6 helical membrane-spanning segments follow: residues 10-32 (IYIS…PIFT), 52-74 (FSVA…LFGI), 78-100 (SFRI…GNFI), 119-141 (ISIV…TIVW), 151-169 (IFGC…WTLF), and 190-207 (IMGL…LAGL).

The protein belongs to the UPF0056 (MarC) family.

Its subcellular location is the cell membrane. This chain is UPF0056 membrane protein bbp_248, found in Buchnera aphidicola subsp. Baizongia pistaciae (strain Bp).